The following is a 154-amino-acid chain: Movement protein (154 aa).

Disordered stretches follow at residues 83–103 (SSPT…HTRP) and 123–154 (WVAT…GRVR).

Belongs to the luteoviruses movement protein family.

Its function is as follows. Transports viral genome to neighboring plant cells directly through plasmosdesmata, without any budding. The movement protein allows efficient cell to cell propagation, by bypassing the host cell wall barrier. This chain is Movement protein, found in Barley yellow dwarf virus (isolate MAV) (BYDV).